The following is a 239-amino-acid chain: tRNA (guanine-N(7)-)-methyltransferase (239 aa).

Residues Glu-69, Glu-94, Asp-121, and Asp-144 each coordinate S-adenosyl-L-methionine. Asp-144 is a catalytic residue. Substrate is bound by residues Lys-148, Asp-180, and 217–220 (TKFE).

Belongs to the class I-like SAM-binding methyltransferase superfamily. TrmB family.

The catalysed reaction is guanosine(46) in tRNA + S-adenosyl-L-methionine = N(7)-methylguanosine(46) in tRNA + S-adenosyl-L-homocysteine. It functions in the pathway tRNA modification; N(7)-methylguanine-tRNA biosynthesis. Its function is as follows. Catalyzes the formation of N(7)-methylguanine at position 46 (m7G46) in tRNA. The chain is tRNA (guanine-N(7)-)-methyltransferase from Pseudoalteromonas atlantica (strain T6c / ATCC BAA-1087).